The following is an 873-amino-acid chain: DNA mismatch repair protein MutS (873 aa).

601-608 (GPNMSGKS) is a binding site for ATP.

It belongs to the DNA mismatch repair MutS family.

Functionally, this protein is involved in the repair of mismatches in DNA. It is possible that it carries out the mismatch recognition step. This protein has a weak ATPase activity. This Staphylococcus epidermidis (strain ATCC 12228 / FDA PCI 1200) protein is DNA mismatch repair protein MutS.